The following is a 621-amino-acid chain: DnaJ homolog subfamily C member 2 (621 aa).

Methionine 1 carries the N-acetylmethionine modification. Serine 47, serine 49, serine 60, and serine 63 each carry phosphoserine. One can recognise a J domain in the interval 88–161 (DHYAVLGLGH…VKRRAFNSVD (74 aa)). A ZRF1-UBD region spans residues 160–250 (VDPTFDNSVP…RDERKWIEKQ (91 aa)). A Phosphoserine modification is found at serine 183. Disordered stretches follow at residues 287-312 (GKAK…KEKQ) and 426-453 (KEEA…GSKN). SANT domains are found at residues 449 to 511 (SGSK…KLDP) and 549 to 604 (IDSI…EMVK).

As to quaternary structure, component of ribosome-associated complex (RAC), a heterodimer composed of Hsp70/DnaK-type chaperone HSPA14 and Hsp40/DnaJ-type chaperone DNAJC2. Interacts (via ZRF1-UBD region) with ID1. In terms of processing, phosphorylated in M (mitotic) phase.

Its subcellular location is the nucleus. It is found in the cytoplasm. The protein resides in the cytosol. In terms of biological role, acts both as a chaperone in the cytosol and as a chromatin regulator in the nucleus. When cytosolic, acts as a molecular chaperone: component of the ribosome-associated complex (RAC), a complex involved in folding or maintaining nascent polypeptides in a folding-competent state. In the RAC complex, stimulates the ATPase activity of the ribosome-associated pool of Hsp70-type chaperones HSPA14 that bind to the nascent polypeptide chain. When nuclear, mediates the switching from polycomb-repressed genes to an active state: specifically recruited at histone H2A ubiquitinated at 'Lys-119' (H2AK119ub), and promotes the displacement of the polycomb PRC1 complex from chromatin, thereby facilitating transcription activation. This Rattus norvegicus (Rat) protein is DnaJ homolog subfamily C member 2 (Dnajc2).